Here is a 307-residue protein sequence, read N- to C-terminus: Nucleotide-binding protein Arth_2083 (307 aa).

ATP is bound at residue 30–37 (GMSGAGRS). GTP is bound at residue 81–84 (DVRS).

The protein belongs to the RapZ-like family.

Displays ATPase and GTPase activities. This Arthrobacter sp. (strain FB24) protein is Nucleotide-binding protein Arth_2083.